The following is a 419-amino-acid chain: Tyrosine--tRNA ligase (419 aa).

Residue Tyr-42 coordinates L-tyrosine. The short motif at 47-56 is the 'HIGH' region element; sequence CTAPSLHVGS. L-tyrosine contacts are provided by Tyr-179 and Gln-183. Residues 239-243 carry the 'KMSKS' region motif; that stretch reads KMGKT. Lys-242 contributes to the ATP binding site. The 67-residue stretch at 353 to 419 folds into the S4 RNA-binding domain; the sequence is LGVLAAFVKA…RKRHVLLKLV (67 aa).

This sequence belongs to the class-I aminoacyl-tRNA synthetase family. TyrS type 1 subfamily. In terms of assembly, homodimer.

The protein resides in the cytoplasm. The enzyme catalyses tRNA(Tyr) + L-tyrosine + ATP = L-tyrosyl-tRNA(Tyr) + AMP + diphosphate + H(+). Catalyzes the attachment of tyrosine to tRNA(Tyr) in a two-step reaction: tyrosine is first activated by ATP to form Tyr-AMP and then transferred to the acceptor end of tRNA(Tyr). In Methylocella silvestris (strain DSM 15510 / CIP 108128 / LMG 27833 / NCIMB 13906 / BL2), this protein is Tyrosine--tRNA ligase.